We begin with the raw amino-acid sequence, 303 residues long: D-alanine--D-alanine ligase (303 aa).

One can recognise an ATP-grasp domain in the interval 104–300 (KLMWQAVGLP…FEKLVERVLE (197 aa)). Residue 132–187 (IAKLGLPVFVKPSSEGSSVGVTKVKTVEQLLPAVEEALKFDSIVLVEAFLAGKEYS) coordinates ATP. Residues D254, E267, and N269 each coordinate Mg(2+).

The protein belongs to the D-alanine--D-alanine ligase family. The cofactor is Mg(2+). Mn(2+) serves as cofactor.

The protein resides in the cytoplasm. The enzyme catalyses 2 D-alanine + ATP = D-alanyl-D-alanine + ADP + phosphate + H(+). The protein operates within cell wall biogenesis; peptidoglycan biosynthesis. Functionally, cell wall formation. This is D-alanine--D-alanine ligase from Actinobacillus pleuropneumoniae serotype 5b (strain L20).